Consider the following 215-residue polypeptide: LysM and putative peptidoglycan-binding domain-containing protein 2 (215 aa).

The disordered stretch occupies residues 1-40 (MADSSPAPSLRAGGPREPRPSAPSPPPPHSRLGSEAEEAE). Ala-2 is modified (N-acetylalanine). Ser-5, Ser-24, Ser-34, and Ser-58 each carry phosphoserine. Positions 20–29 (PSAPSPPPPH) are enriched in pro residues. The LysM domain maps to 72 to 116 (VEHRVRAGDTLQGIALKYGVSMEQIKRANKLFTNDCIFLKKTLNI). Residues 194-215 (AKKLKGESRDEEGLYTASLYHS) form a disordered region.

This chain is LysM and putative peptidoglycan-binding domain-containing protein 2 (LYSMD2), found in Bos taurus (Bovine).